The following is a 100-amino-acid chain: MILLKLYLTLAAILCQSRGTTSLDLDDLMTTNPEIQNEIINKHNDLRRTVDPPAKNMLKMSWDNIIAESAKRAALRCNQNEHTPVSGRTIGGCGCAEKIT.

The first 22 residues, 1–22 (MILLKLYLTLAAILCQSRGTTS), serve as a signal peptide directing secretion. One can recognise an SCP domain in the interval 41–81 (NKHNDLRRTVDPPAKNMLKMSWDNIIAESAKRAALRCNQNE).

The protein belongs to the CRISP family. In terms of processing, contains 8 disulfide bonds. In terms of tissue distribution, expressed by the venom gland.

The protein localises to the secreted. Blocks ryanodine receptors, and potassium channels. In Varanus acanthurus (Ridge-tailed monitor), this protein is Cysteine-rich venom protein VAR1.